A 260-amino-acid chain; its full sequence is Adenosylcobinamide-GDP ribazoletransferase (260 aa).

A run of 6 helical transmembrane segments spans residues 40–60, 64–84, 117–137, 142–162, 188–208, and 209–229; these read AFPFAGIVIGFIPALALLLLL, ADPLMAALIALSIQVLVTGAL, YGAIALILSLAIRAAALAVIA, PLTAALAIPAVAALSRGAIAW, QFALASAGLVAALLIWPAFGL, and RPLVASLLATGIAGFAFTAFI.

It belongs to the CobS family. Mg(2+) is required as a cofactor.

The protein localises to the cell inner membrane. It catalyses the reaction alpha-ribazole + adenosylcob(III)inamide-GDP = adenosylcob(III)alamin + GMP + H(+). The catalysed reaction is alpha-ribazole 5'-phosphate + adenosylcob(III)inamide-GDP = adenosylcob(III)alamin 5'-phosphate + GMP + H(+). Its pathway is cofactor biosynthesis; adenosylcobalamin biosynthesis; adenosylcobalamin from cob(II)yrinate a,c-diamide: step 7/7. In terms of biological role, joins adenosylcobinamide-GDP and alpha-ribazole to generate adenosylcobalamin (Ado-cobalamin). Also synthesizes adenosylcobalamin 5'-phosphate from adenosylcobinamide-GDP and alpha-ribazole 5'-phosphate. The sequence is that of Adenosylcobinamide-GDP ribazoletransferase from Rhizobium johnstonii (strain DSM 114642 / LMG 32736 / 3841) (Rhizobium leguminosarum bv. viciae).